The sequence spans 319 residues: Acetyl esterase (319 aa).

An Involved in the stabilization of the negatively charged intermediate by the formation of the oxyanion hole motif is present at residues 91 to 93; it reads HGG. Catalysis depends on residues S165, D262, and H292.

This sequence belongs to the 'GDXG' lipolytic enzyme family. In terms of assembly, homodimer. Interacts with MalT and MelA.

The protein resides in the cytoplasm. Functionally, displays esterase activity towards short chain fatty esters (acyl chain length of up to 8 carbons). Able to hydrolyze triacetylglycerol (triacetin) and tributyrylglycerol (tributyrin), but not trioleylglycerol (triolein) or cholesterol oleate. Negatively regulates MalT activity by antagonizing maltotriose binding. Inhibits MelA galactosidase activity. This chain is Acetyl esterase, found in Escherichia coli O17:K52:H18 (strain UMN026 / ExPEC).